The sequence spans 917 residues: DNA mismatch repair protein spellchecker 1 (917 aa).

667-674 serves as a coordination point for ATP; sequence GPNMGGKS.

It belongs to the DNA mismatch repair MutS family. Heterodimer of Msh2/Spel and Msh6.

The protein resides in the nucleus. In terms of biological role, involved in postreplication mismatch repair. Binds specifically to DNA containing mismatched nucleotides thus providing a target for the excision repair processes characteristic of postreplication mismatch repair. This Drosophila melanogaster (Fruit fly) protein is DNA mismatch repair protein spellchecker 1 (spel1).